A 483-amino-acid chain; its full sequence is Replication factor C large subunit (483 aa).

G44 to T51 serves as a coordination point for ATP. Residues A415–M483 are disordered. Over residues A430–D443 the composition is skewed to acidic residues. Basic and acidic residues predominate over residues D451–S463.

The protein belongs to the activator 1 small subunits family. RfcL subfamily. Heteromultimer composed of small subunits (RfcS) and large subunits (RfcL).

Part of the RFC clamp loader complex which loads the PCNA sliding clamp onto DNA. The protein is Replication factor C large subunit of Natronomonas pharaonis (strain ATCC 35678 / DSM 2160 / CIP 103997 / JCM 8858 / NBRC 14720 / NCIMB 2260 / Gabara) (Halobacterium pharaonis).